A 143-amino-acid polypeptide reads, in one-letter code: TTLSDKDKSTVKALWGKISKSADAIGADALGRMLAVYPQTKTYFSHWPDMSPGSGPVKAHGKKVMGGVALAVTKIDDLTTGLGDLSELHAFKMRVDPSNFKILSHCILVVVAKMFPKEFTPDAHVSLDKFLASVALALAERYR.

One can recognise a Globin domain in the interval 2 to 143 (TLSDKDKSTV…VALALAERYR (142 aa)). Position 60 (His60) interacts with O2. His89 provides a ligand contact to heme b.

This sequence belongs to the globin family. As to quaternary structure, heterotetramer of two alpha chains and two beta chains. In terms of tissue distribution, red blood cells.

Its function is as follows. Involved in oxygen transport from gills to the various peripheral tissues. The protein is Hemoglobin subunit alpha (hba) of Thunnus thynnus (Atlantic bluefin tuna).